We begin with the raw amino-acid sequence, 760 residues long: Heat shock transcription factor (760 aa).

Disordered regions lie at residues 1–132 and 206–276; these read MIMN…PPVV and FHPL…GPKT. Composition is skewed to polar residues over residues 19–31 and 38–88; these read TESN…SSPS and RSGT…SNKL. Over residues 119–130 the composition is skewed to basic and acidic residues; the sequence is DYKDSIDLDKPP. Residues 221 to 247 are compositionally biased toward low complexity; sequence AGPANNSQQQQQQQQQDSSIPSDGISS. Residues 276-385 mediate DNA binding; sequence TRPAFVMKIW…EDLLDKIVRN (110 aa). Residues 414–467 form an involved in trimerization region; sequence ELETIKMNQYVISEDLRRVRQDNKMLWQENYLNRERNQVQGRTLDKILKFLSVV. Disordered stretches follow at residues 492–545, 560–582, 609–630, and 674–760; these read TQYR…NNNN, LTNR…EGSI, HQPG…SAPS, and QEQH…VSDH. The segment covering 515–539 has biased composition (polar residues); the sequence is NSRFARDNNQTAQPTYESPLSTSDT. Residue serine 570 is modified to Phosphoserine. Threonine 574 is subject to Phosphothreonine. Residue serine 576 is modified to Phosphoserine. Threonine 577 carries the phosphothreonine modification. Residues 613–628 show a composition bias toward low complexity; sequence ATTNNNNHSSSTAISA. Positions 646–684 form a coiled coil; the sequence is RNLDDLEKHINKEGQSIQQVQDWIDKLAQEQHEKQQQQQ. Composition is skewed to polar residues over residues 701–722 and 731–742; these read ATTT…NISF and PGSNVSSNINDS. Residues 744 to 760 are compositionally biased toward basic and acidic residues; sequence GNEKKSKKRSIEEVSDH.

The protein belongs to the HSF family. As to quaternary structure, homotrimer. Homotrimerization increases the affinity of HSF1 to DNA. Interacts with HSP90. In terms of processing, activated by phosphorylation of at least Ser-570, Thr-574, Ser-576 and Thr-577 in response to heat shock. Additional unidentified residues are also phosphorylated in response to heat shock.

Its subcellular location is the nucleus. DNA-binding transcription factor that specifically binds heat shock promoter elements (HSE) and activates transcription. With HSP90, is required for the modulation of the chaperone levels in response to growth temperature, rather than the activation of acute responses to sudden thermal transitions. Activated during infection and contributes to full virulence. The protein is Heat shock transcription factor of Candida albicans (strain SC5314 / ATCC MYA-2876) (Yeast).